We begin with the raw amino-acid sequence, 506 residues long: Maturase K (506 aa).

Belongs to the intron maturase 2 family. MatK subfamily.

The protein localises to the plastid. It is found in the chloroplast. Functionally, usually encoded in the trnK tRNA gene intron. Probably assists in splicing its own and other chloroplast group II introns. The protein is Maturase K of Trifolium hirtum (Rose clover).